Reading from the N-terminus, the 195-residue chain is Small ribosomal subunit protein uS5 (195 aa).

A disordered region spans residues 1–20; that stretch reads MAREREGGGRGRREDREERD. The S5 DRBM domain occupies 23-86; it reads FVDKLVHINR…EAAKRGLIRV (64 aa). Residues 161–195 are disordered; the sequence is DSPRSVAARRGIKVSTLQSRRRDADPADQSEAAVA.

The protein belongs to the universal ribosomal protein uS5 family. Part of the 30S ribosomal subunit. Contacts proteins S4 and S8.

Its function is as follows. With S4 and S12 plays an important role in translational accuracy. In terms of biological role, located at the back of the 30S subunit body where it stabilizes the conformation of the head with respect to the body. In Methylobacterium radiotolerans (strain ATCC 27329 / DSM 1819 / JCM 2831 / NBRC 15690 / NCIMB 10815 / 0-1), this protein is Small ribosomal subunit protein uS5.